Reading from the N-terminus, the 97-residue chain is MEIKKSYKDYKKLVWNVSTEFTQALARIMFFYIVNDLETAKNLAKITSPYLPKVPSKLLKELSEAIEEEIKAKSDIEKEKAKEKVKKAFVKLFYYTV.

This is an uncharacterized protein from Methanocaldococcus jannaschii (strain ATCC 43067 / DSM 2661 / JAL-1 / JCM 10045 / NBRC 100440) (Methanococcus jannaschii).